Reading from the N-terminus, the 316-residue chain is Ribosomal RNA small subunit methyltransferase H (316 aa).

S-adenosyl-L-methionine contacts are provided by residues 35 to 37, D55, F84, D105, and Q112; that span reads AGH.

Belongs to the methyltransferase superfamily. RsmH family.

It localises to the cytoplasm. The enzyme catalyses cytidine(1402) in 16S rRNA + S-adenosyl-L-methionine = N(4)-methylcytidine(1402) in 16S rRNA + S-adenosyl-L-homocysteine + H(+). In terms of biological role, specifically methylates the N4 position of cytidine in position 1402 (C1402) of 16S rRNA. This chain is Ribosomal RNA small subunit methyltransferase H, found in Streptococcus thermophilus (strain CNRZ 1066).